Reading from the N-terminus, the 380-residue chain is Cytochrome b (380 aa).

Helical transmembrane passes span Tyr34 to Met54, Trp78 to Ile99, Trp114 to Leu134, and Phe179 to Leu199. 2 residues coordinate heme b: His84 and His98. Residues His183 and His197 each coordinate heme b. An a ubiquinone-binding site is contributed by His202. 4 consecutive transmembrane segments (helical) span residues Tyr227–Asn247, Leu289–His309, Leu321–Gly341, and Phe348–Pro368.

This sequence belongs to the cytochrome b family. As to quaternary structure, the cytochrome bc1 complex contains 3 respiratory subunits (MT-CYB, CYC1 and UQCRFS1), 2 core proteins (UQCRC1 and UQCRC2) and probably 6 low-molecular weight proteins. Requires heme b as cofactor.

The protein localises to the mitochondrion inner membrane. Its function is as follows. Component of the ubiquinol-cytochrome c reductase complex (complex III or cytochrome b-c1 complex) that is part of the mitochondrial respiratory chain. The b-c1 complex mediates electron transfer from ubiquinol to cytochrome c. Contributes to the generation of a proton gradient across the mitochondrial membrane that is then used for ATP synthesis. The protein is Cytochrome b (mt-cyb) of Typhlonectes natans (Rubber eel).